We begin with the raw amino-acid sequence, 196 residues long: uncharacterized protein (196 aa).

CBS domains are found at residues 10-69 and 76-132; these read ARRD…NPDE and MSQP…LVAT. The region spanning 153–187 is the ACP-type MB domain; the sequence is IIEGVCDLCETYSEELRFVDGVWVCPECYEDILGR. Residues cysteine 158, cysteine 161, cysteine 177, and cysteine 180 each contribute to the Fe cation site. Zn(2+) is bound by residues cysteine 158, cysteine 161, cysteine 177, and cysteine 180.

This is an uncharacterized protein from Methanopyrus kandleri (strain AV19 / DSM 6324 / JCM 9639 / NBRC 100938).